Here is a 383-residue protein sequence, read N- to C-terminus: MKTSLISGERFYSLEESNLVKEIFKKAVKIFEAFGYDYINLSHFEPYEFQELTFGEGSKEAITFKDSYTKESFGLRLDFTTQVVRTISHLRNVKLPERVYYFGKVFSLDRRGFEKLQTGVELIGEKSILADFEVIQVLTEFLKSLGLKDLKVILSHAGIVRKVADEREELLRAFSERNLEALKEVLGNDIKFFVEVSKNPEVLNFLEKYDLEKEKEELLELGKLLEEFGIDYAYDLGEVRNFPYYTGVIFEIYELKSGKALAGGGRYDNLSKIYGKEYPATGGAVYLERLLDILPKNVEKKDYFVIDKTKKRLGLKLADVLREKGKKVGMEIVKERGLEHSLIYAFDKGFKEVLLVEDEIVKVYTTPKDYVVMKIREFLDLIE.

Belongs to the class-II aminoacyl-tRNA synthetase family. HisZ subfamily. Heteromultimer composed of HisG and HisZ subunits.

The protein localises to the cytoplasm. It participates in amino-acid biosynthesis; L-histidine biosynthesis; L-histidine from 5-phospho-alpha-D-ribose 1-diphosphate: step 1/9. In terms of biological role, required for the first step of histidine biosynthesis. May allow the feedback regulation of ATP phosphoribosyltransferase activity by histidine. This is ATP phosphoribosyltransferase regulatory subunit (hisZ) from Aquifex aeolicus (strain VF5).